Consider the following 1042-residue polypeptide: Starch synthase 3, chloroplastic/amyloplastic (1042 aa).

A chloroplast-targeting transit peptide spans 1–44 (MISYFLNQDFSRKKQGRMAASGPKSSGPRGFGRRTTVGSAQKRT). The disordered stretch occupies residues 1 to 63 (MISYFLNQDF…NATSTATNEV (63 aa)). Over residues 54–63 (NATSTATNEV) the composition is skewed to polar residues. Positions 247–302 (ENFLLEEKLREQEKLAKEEAERERQKEEKRRIEAQKAAIEADRAQAKAETQKRREL) form a coiled coil. An ADP-alpha-D-glucose-binding site is contributed by K608.

The protein belongs to the glycosyltransferase 1 family. Bacterial/plant glycogen synthase subfamily. As to expression, expressed in leaves and flowers.

Its subcellular location is the plastid. It localises to the chloroplast. The protein resides in the amyloplast. The enzyme catalyses [(1-&gt;4)-alpha-D-glucosyl](n) + ADP-alpha-D-glucose = [(1-&gt;4)-alpha-D-glucosyl](n+1) + ADP + H(+). It participates in glycan biosynthesis; starch biosynthesis. In terms of biological role, involved in the synthesis of glycan chains within amylopectin in leaves. May play a regulatory role in the control of starch accumulation in plastids. This is Starch synthase 3, chloroplastic/amyloplastic (SS3) from Arabidopsis thaliana (Mouse-ear cress).